The primary structure comprises 448 residues: Chromogranin-A (448 aa).

An N-terminal signal peptide occupies residues 1–18 (MRSAVVLALLLCAGQVIA). Cysteines 35 and 56 form a disulfide. The interval 116 to 251 (LKEVTEEALS…AFNPHPSLSY (136 aa)) is disordered. 2 stretches are compositionally biased toward basic and acidic residues: residues 129–139 (AEARGDSKEVE) and 158–175 (QESRVEDAQAPGEEKEAI). S197 carries the post-translational modification Phosphoserine. Residues 205 to 222 (VDREKGLGAERGQQAKRE) show a composition bias toward basic and acidic residues. The span at 223-238 (EEEDEAGEKADAEEEG) shows a compositional bias: acidic residues. Residues S258 and S288 each carry the phosphoserine modification. The segment at 263–429 (LVVDGARKTG…PEDQELESLS (167 aa)) is disordered. G308 is subject to Glycine amide. Residues 310–350 (KSRELEQEKEQERLSKEWEDAKRWSKMDQLAKELTAEKRLE) are compositionally biased toward basic and acidic residues. A phosphoserine mark is found at S311, S324, and S362. A Methionine sulfoxide modification is found at M363. Residues S389, S393, S415, and S429 each carry the phosphoserine modification. Basic and acidic residues predominate over residues 405 to 422 (YPEEKKEEEGSANRRPED). The O-linked (Xyl...) (chondroitin sulfate) serine glycan is linked to S415.

Belongs to the chromogranin/secretogranin protein family. Self-interacts; self-assembly is promoted in vitro by chondroitin sulfate attachment which occurs at mildly acidic pH conditions. Interacts with SCG3. Interacts with ITPR1 in the secretory granules. O-glycosylated; contains chondroitin sulfate (CS). CS attachment is pH-dependent, being observed at mildly acidic conditions of pH 5 but not at neutral pH, and promotes self-assembly in vitro. Highly expressed in adrenal medulla and pituitary gland. Weaker expression detected in cerebrum, cerebellum, spinal cord, liver, thyroid gland, striated muscle, lung, spleen, kidney, parotid gland, and sublingual gland.

The protein localises to the secreted. Its subcellular location is the cytoplasmic vesicle. It localises to the secretory vesicle. It is found in the neuronal dense core vesicle. Strongly inhibits glucose induced insulin release from the pancreas. Its function is as follows. Inhibits catecholamine release from chromaffin cells and noradrenergic neurons by acting as a non-competitive nicotinic cholinergic antagonist. Can induce mast cell migration, degranulation and production of cytokines and chemokines. Functionally, regulates granule biogenesis in endocrine cells by up-regulating the transcription of protease nexin 1 (SERPINE2) via a cAMP-PKA-SP1 pathway. This leads to inhibition of granule protein degradation in the Golgi complex which in turn promotes granule formation. The sequence is that of Chromogranin-A (CHGA) from Equus caballus (Horse).